Reading from the N-terminus, the 238-residue chain is Small ribosomal subunit protein eS4 (238 aa).

In terms of domain architecture, S4 RNA-binding spans 38–100 (LPLAIVIRDV…TGEVYRVVPD (63 aa)).

The protein belongs to the eukaryotic ribosomal protein eS4 family.

In Pyrobaculum arsenaticum (strain DSM 13514 / JCM 11321 / PZ6), this protein is Small ribosomal subunit protein eS4.